The primary structure comprises 727 residues: MTPPPPPPPPPGPDPAADPAADPCPWPGSLVVLFGATAGALGRDLGSDETDLILLVWQVVEPRSRQVGTLHKSLVRAEAAALSTQCREASGLSADSLARAEPLDKVLQQFSQLVNGDVALLGGGPYMLCTDGQQLLRQVLHPEASRKNLVLPDMFFSFYDLRREFHMQHPSTCPARDLTVATMAQGLGLETDATEDDFGVWEVKTMVAVILHLLKEPSSQLFSKPEVIKQKYETGPCSDSTVPCPYSSKADVVDSETVVRARGLPWQSSDQDVARFFKGLNVARGGVALCLNAQGRRNGEALIRFVDSEQRDLALQRHKHHMGVRYIEVYKATGEEFVKIAGGTSLEVARFLSREDQVILRLRGLPFSAGPTDVLGFLGPECPVTGGTEGLLFVRHPDGRPTGDAFALFACEELAQAALRRHKGMLGKRYIELFRSTAAEVQQVLNRYASGPLLPTLTAPLLPIPFPLAPGTGRDCVRLRGLPYTATIEDILSFLGEAAADIRPHGVHMVLNQQGRPSGDAFIQMTSAERALAAAQRCHKKVMKERYVEVVPCSTEEMSRVLMGGTLGRSGMSPPPCKLPCLSPPTYTTFQATPTLIPTETAALYPSSALLPAARVPAAPTPVAYYPGPATQLYLNYTAYYPSPPVSPTTVGYLTTPTAALASAPTSVLSQSGALVRMQGVPYTAGMKDLLSVFQAYQLPADDYTSLMPVGDPPRTVLQAPKEWVCL.

A disordered region spans residues 1 to 22; that stretch reads MTPPPPPPPPPGPDPAADPAAD. Phosphoserine is present on serine 83. RRM domains follow at residues 257 to 353, 358 to 438, and 475 to 555; these read TVVR…RFLS, VILR…RSTA, and DCVR…PCST. A Phosphoserine modification is found at serine 573.

This sequence belongs to the ESRP family. As to quaternary structure, interacts with RBPMS. As to expression, epithelial cell-specific.

The protein localises to the nucleus. Functionally, mRNA splicing factor that regulates the formation of epithelial cell-specific isoforms. Specifically regulates the expression of FGFR2-IIIb, an epithelial cell-specific isoform of FGFR2. Also regulates the splicing of CD44, CTNND1, ENAH, 3 transcripts that undergo changes in splicing during the epithelial-to-mesenchymal transition (EMT). Acts by directly binding specific sequences in mRNAs. Binds the GU-rich sequence motifs in the ISE/ISS-3, a cis-element regulatory region present in the mRNA of FGFR2. In Homo sapiens (Human), this protein is Epithelial splicing regulatory protein 2 (ESRP2).